Consider the following 147-residue polypeptide: MSQGQGGITLDDLIAQADYLKRYIDSLQRTQLELLESINSIDSAKQAIETIKSGNKEMLVFIDRKGYLLAKVGGIIGDKVTVHLGLSYYAEVDLDSAIKILDKRKDEISKAAQNLNNELQKAASTYNQIVDILNQIQQAAARRQQGE.

This sequence belongs to the prefoldin alpha subunit family. Heterohexamer of two alpha and four beta subunits.

It is found in the cytoplasm. Molecular chaperone capable of stabilizing a range of proteins. Seems to fulfill an ATP-independent, HSP70-like function in archaeal de novo protein folding. The polypeptide is Prefoldin subunit alpha (Saccharolobus islandicus (strain M.16.27) (Sulfolobus islandicus)).